We begin with the raw amino-acid sequence, 167 residues long: Peptide deformylase (167 aa).

Fe cation is bound by residues cysteine 91 and histidine 133. Glutamate 134 is an active-site residue. Residue histidine 137 participates in Fe cation binding.

It belongs to the polypeptide deformylase family. It depends on Fe(2+) as a cofactor.

It catalyses the reaction N-terminal N-formyl-L-methionyl-[peptide] + H2O = N-terminal L-methionyl-[peptide] + formate. Functionally, removes the formyl group from the N-terminal Met of newly synthesized proteins. Requires at least a dipeptide for an efficient rate of reaction. N-terminal L-methionine is a prerequisite for activity but the enzyme has broad specificity at other positions. The sequence is that of Peptide deformylase from Neisseria meningitidis serogroup C (strain 053442).